We begin with the raw amino-acid sequence, 161 residues long: Large ribosomal subunit protein uL16 (161 aa).

A disordered region spans residues 140-161 (LNKGNYKPAKTPVTADDSESSS).

Belongs to the universal ribosomal protein uL16 family. As to quaternary structure, part of the 50S ribosomal subunit.

In terms of biological role, binds 23S rRNA and is also seen to make contacts with the A and possibly P site tRNAs. The chain is Large ribosomal subunit protein uL16 from Prochlorococcus marinus (strain NATL2A).